The following is a 267-amino-acid chain: Distal basal body ring component protein (267 aa).

The first 29 residues, 1 to 29 (MKAFLFAAAATLVITALSAPAFAGTPVTL), serve as a signal peptide directing secretion.

In terms of assembly, flaD is a subunit of the flagellar transenvelope basal body.

The protein localises to the periplasm. It is found in the bacterial flagellum basal body. Its function is as follows. FlaD might be the structural protein of the distal basal body ring P, or it is necessary for the assembly of the P ring. This chain is Distal basal body ring component protein (flaD), found in Caulobacter vibrioides (strain ATCC 19089 / CIP 103742 / CB 15) (Caulobacter crescentus).